A 724-amino-acid chain; its full sequence is Methionine--tRNA ligase (724 aa).

The 'HIGH' region signature appears at Pro-12 to Asn-22. Zn(2+) is bound by residues Cys-143, Cys-146, Cys-155, and Cys-158. The short motif at Lys-330 to Ser-334 is the 'KMSKS' region element. Residue Lys-333 coordinates ATP. One can recognise a tRNA-binding domain in the interval Phe-560–Ile-665.

Belongs to the class-I aminoacyl-tRNA synthetase family. MetG type 1 subfamily. As to quaternary structure, homodimer. Zn(2+) is required as a cofactor.

The protein localises to the cytoplasm. It carries out the reaction tRNA(Met) + L-methionine + ATP = L-methionyl-tRNA(Met) + AMP + diphosphate. Its function is as follows. Is required not only for elongation of protein synthesis but also for the initiation of all mRNA translation through initiator tRNA(fMet) aminoacylation. This is Methionine--tRNA ligase from Borrelia garinii subsp. bavariensis (strain ATCC BAA-2496 / DSM 23469 / PBi) (Borreliella bavariensis).